An 87-amino-acid chain; its full sequence is Defensin-like protein 81 (87 aa).

An N-terminal signal peptide occupies residues 1–27 (MTIKKFLPLLLSSLMVYSLILLPIISG). Cystine bridges form between cysteine 33/cysteine 69, cysteine 37/cysteine 57, cysteine 43/cysteine 67, and cysteine 47/cysteine 68.

The protein belongs to the DEFL family.

The protein localises to the secreted. This chain is Defensin-like protein 81, found in Arabidopsis thaliana (Mouse-ear cress).